Consider the following 227-residue polypeptide: Chloronitrobenzene nitroreductase (227 aa).

14–18 (RRTKR) provides a ligand contact to FMN. An NADP(+)-binding site is contributed by serine 44. Residues 172–173 (GL) and arginine 215 each bind FMN.

The protein belongs to the nitroreductase family. FMN serves as cofactor.

The catalysed reaction is N-phenylhydroxylamine + 2 NADP(+) + H2O = nitrobenzene + 2 NADPH + 2 H(+). It functions in the pathway xenobiotic degradation; nitrobenzene degradation. It participates in xenobiotic degradation; 4-chloronitrobenzene degradation. Functionally, involved in the biodegradation of chlorinated nitroaromatic compounds. Catalyzes the reduction of 4-chloronitrobenzene to yield 1-hydroxylamino-4-chlorobenzene. Probably also able to catalyze the two-electron reduction of nitrobenzene (NB) to produce a nitrosobenzene (NOB) intermediate, which is immediately reduced to hydroxylaminobenzene (HAB) by a second two-electron transfer. In Comamonas testosteroni (Pseudomonas testosteroni), this protein is Chloronitrobenzene nitroreductase.